An 800-amino-acid polypeptide reads, in one-letter code: Small ribosomal subunit protein uS3c (800 aa).

The interval 1-118 (MGQKVHPSGF…LQVKKDILVK (118 aa)) is S3-like 1st part. The intervening sequence (IVS) stretch occupies residues 119 to 664 (LQKTRQYLTN…FLDCKFEELE (546 aa)). The S3-like 2nd part stretch occupies residues 665–800 (RRKTMWVQNL…TKLVTESTGA (136 aa)).

This sequence belongs to the universal ribosomal protein uS3 family. In terms of assembly, part of the 30S ribosomal subunit.

It is found in the plastid. Its subcellular location is the chloroplast. The sequence is that of Small ribosomal subunit protein uS3c (rps3) from Chlamydomonas moewusii (Chlamydomonas eugametos).